The chain runs to 377 residues: Succinyl-diaminopimelate desuccinylase (377 aa).

Position 66 (histidine 66) interacts with Zn(2+). The active site involves aspartate 68. A Zn(2+)-binding site is contributed by aspartate 99. The active-site Proton acceptor is the glutamate 133. The Zn(2+) site is built by glutamate 134, glutamate 163, and histidine 349.

This sequence belongs to the peptidase M20A family. DapE subfamily. As to quaternary structure, homodimer. Requires Zn(2+) as cofactor. It depends on Co(2+) as a cofactor.

The enzyme catalyses N-succinyl-(2S,6S)-2,6-diaminopimelate + H2O = (2S,6S)-2,6-diaminopimelate + succinate. It functions in the pathway amino-acid biosynthesis; L-lysine biosynthesis via DAP pathway; LL-2,6-diaminopimelate from (S)-tetrahydrodipicolinate (succinylase route): step 3/3. Functionally, catalyzes the hydrolysis of N-succinyl-L,L-diaminopimelic acid (SDAP), forming succinate and LL-2,6-diaminopimelate (DAP), an intermediate involved in the bacterial biosynthesis of lysine and meso-diaminopimelic acid, an essential component of bacterial cell walls. This Legionella pneumophila (strain Lens) protein is Succinyl-diaminopimelate desuccinylase.